A 397-amino-acid polypeptide reads, in one-letter code: Succinate--CoA ligase [ADP-forming] subunit beta (397 aa).

The ATP-grasp domain maps to 9 to 254 (KALLRSYGAP…ETEEDPKELA (246 aa)). ATP contacts are provided by residues lysine 46, 53 to 55 (GRG), glutamate 109, serine 112, and glutamate 117. Mg(2+) is bound by residues asparagine 209 and aspartate 223. Substrate contacts are provided by residues asparagine 274 and 331 to 333 (GIM).

It belongs to the succinate/malate CoA ligase beta subunit family. Heterotetramer of two alpha and two beta subunits. Requires Mg(2+) as cofactor.

The enzyme catalyses succinate + ATP + CoA = succinyl-CoA + ADP + phosphate. It catalyses the reaction GTP + succinate + CoA = succinyl-CoA + GDP + phosphate. The protein operates within carbohydrate metabolism; tricarboxylic acid cycle; succinate from succinyl-CoA (ligase route): step 1/1. Succinyl-CoA synthetase functions in the citric acid cycle (TCA), coupling the hydrolysis of succinyl-CoA to the synthesis of either ATP or GTP and thus represents the only step of substrate-level phosphorylation in the TCA. The beta subunit provides nucleotide specificity of the enzyme and binds the substrate succinate, while the binding sites for coenzyme A and phosphate are found in the alpha subunit. The protein is Succinate--CoA ligase [ADP-forming] subunit beta of Cereibacter sphaeroides (strain ATCC 17025 / ATH 2.4.3) (Rhodobacter sphaeroides).